We begin with the raw amino-acid sequence, 148 residues long: Glycine cleavage system H protein 5 (148 aa).

Positions 33-115 (VFTIGLTSVA…YGQGWIAKVK (83 aa)) constitute a Lipoyl-binding domain. Residue Lys74 is modified to N6-lipoyllysine.

Belongs to the GcvH family. In terms of assembly, the glycine cleavage system is composed of four proteins: P, T, L and H. (R)-lipoate serves as cofactor.

The glycine cleavage system catalyzes the degradation of glycine. The H protein shuttles the methylamine group of glycine from the P protein to the T protein. The sequence is that of Glycine cleavage system H protein 5 from Aquifex aeolicus (strain VF5).